The following is an 899-amino-acid chain: Valine--tRNA ligase (899 aa).

The 'HIGH' region signature appears at 58–68 (PNVTGVLHIGH). Residues 544-548 (KMSKS) carry the 'KMSKS' region motif. Position 547 (lysine 547) interacts with ATP. Residues 836-898 (GTRLHNQRQK…NAELIALGLQ (63 aa)) are a coiled coil.

This sequence belongs to the class-I aminoacyl-tRNA synthetase family. ValS type 1 subfamily. As to quaternary structure, monomer.

The protein localises to the cytoplasm. The catalysed reaction is tRNA(Val) + L-valine + ATP = L-valyl-tRNA(Val) + AMP + diphosphate. In terms of biological role, catalyzes the attachment of valine to tRNA(Val). As ValRS can inadvertently accommodate and process structurally similar amino acids such as threonine, to avoid such errors, it has a 'posttransfer' editing activity that hydrolyzes mischarged Thr-tRNA(Val) in a tRNA-dependent manner. The chain is Valine--tRNA ligase from Helicobacter hepaticus (strain ATCC 51449 / 3B1).